The following is a 197-amino-acid chain: Imidazoleglycerol-phosphate dehydratase (197 aa).

This sequence belongs to the imidazoleglycerol-phosphate dehydratase family.

It localises to the cytoplasm. The catalysed reaction is D-erythro-1-(imidazol-4-yl)glycerol 3-phosphate = 3-(imidazol-4-yl)-2-oxopropyl phosphate + H2O. Its pathway is amino-acid biosynthesis; L-histidine biosynthesis; L-histidine from 5-phospho-alpha-D-ribose 1-diphosphate: step 6/9. This Streptomyces avermitilis (strain ATCC 31267 / DSM 46492 / JCM 5070 / NBRC 14893 / NCIMB 12804 / NRRL 8165 / MA-4680) protein is Imidazoleglycerol-phosphate dehydratase.